The following is a 491-amino-acid chain: Carboxypeptidase SOL1 (491 aa).

Residues Met1–Ala25 form the signal peptide. At Arg26 to Asn452 the chain is on the extracellular side. Asn39 is a glycosylation site (N-linked (GlcNAc...) asparagine). One can recognise a Peptidase M14 domain in the interval Gly64 to Leu338. Zn(2+) contacts are provided by His125 and Glu128. Residues His125 to Glu128 and Asn186 to Arg187 each bind substrate. His226 provides a ligand contact to Zn(2+). The N-linked (GlcNAc...) asparagine glycan is linked to Asn268. Tyr286 is a binding site for substrate. Glu308 serves as the catalytic Proton donor/acceptor. The chain crosses the membrane as a helical span at residues Asn453 to Leu470. At Gln471–Val491 the chain is on the cytoplasmic side.

The protein belongs to the peptidase M14 family. Requires Zn(2+) as cofactor. Expressed in roots, shoots, leaves, flowers and siliques.

It is found in the endosome membrane. Possesses in vitro carboxypeptidase activity against the C-terminal arginine and lysine residues. Involved in the maturation of CLE19. Removes the C-terminal arginine residue of CLE19 proprotein. The cleavage of the C-terminal arginine residue is necessary for CLE19 activity in vivo. Is not involved in generating active CLV3. Is not involved in CLE19 or CLV3 perception. The protein is Carboxypeptidase SOL1 of Arabidopsis thaliana (Mouse-ear cress).